The following is a 33-amino-acid chain: uncharacterized protein (33 aa).

The interval 1–24 is disordered; the sequence is MRTGTRCDLGELSHPRKTLPPRGM.

This is an uncharacterized protein from Treponema pallidum (strain Nichols).